We begin with the raw amino-acid sequence, 205 residues long: MTDNVSAVILAGGASRRMGTDKSMLKLKGKKMIEIVIESISDIFDELVIVSNSPEKFDYKNNDFKVVSDKLTHLKRSSLRGIYTGLTEISNEYGFIFAGDMPFISPELIKAMISEMRKDKWDIIIPVISGHYEPLFAVYHKNCHYTMKQQLLHENFKITDSLKEFKVLELTDNYCVQYDEYLASFFNINTPEDLEQARKYLGKTE.

GTP-binding positions include 10–12 (LAG), Lys-22, Asp-69, and Asp-100. Asp-100 is a Mg(2+) binding site.

The protein belongs to the MobA family. The cofactor is Mg(2+).

Its subcellular location is the cytoplasm. The catalysed reaction is Mo-molybdopterin + GTP + H(+) = Mo-molybdopterin guanine dinucleotide + diphosphate. In terms of biological role, transfers a GMP moiety from GTP to Mo-molybdopterin (Mo-MPT) cofactor (Moco or molybdenum cofactor) to form Mo-molybdopterin guanine dinucleotide (Mo-MGD) cofactor. In Natranaerobius thermophilus (strain ATCC BAA-1301 / DSM 18059 / JW/NM-WN-LF), this protein is Probable molybdenum cofactor guanylyltransferase.